The sequence spans 204 residues: Imidazoleglycerol-phosphate dehydratase (204 aa).

Belongs to the imidazoleglycerol-phosphate dehydratase family.

It is found in the cytoplasm. It carries out the reaction D-erythro-1-(imidazol-4-yl)glycerol 3-phosphate = 3-(imidazol-4-yl)-2-oxopropyl phosphate + H2O. It functions in the pathway amino-acid biosynthesis; L-histidine biosynthesis; L-histidine from 5-phospho-alpha-D-ribose 1-diphosphate: step 6/9. In Corynebacterium urealyticum (strain ATCC 43042 / DSM 7109), this protein is Imidazoleglycerol-phosphate dehydratase.